The primary structure comprises 306 residues: Pantothenate kinase (306 aa).

91 to 98 (GSVAVGKS) lines the ATP pocket.

It belongs to the prokaryotic pantothenate kinase family.

It localises to the cytoplasm. It catalyses the reaction (R)-pantothenate + ATP = (R)-4'-phosphopantothenate + ADP + H(+). It participates in cofactor biosynthesis; coenzyme A biosynthesis; CoA from (R)-pantothenate: step 1/5. In Streptococcus thermophilus (strain ATCC BAA-491 / LMD-9), this protein is Pantothenate kinase.